A 376-amino-acid polypeptide reads, in one-letter code: Methionine import ATP-binding protein MetN 2 (376 aa).

Residues 1–25 (MTATAQRQRPIDTTGAGQRAQQAEL) form a disordered region. The ABC transporter domain occupies 34 to 273 (VRFINLGKTY…PQHEVSKTLL (240 aa)). ATP is bound at residue 70-77 (GRSGAGKS).

The protein belongs to the ABC transporter superfamily. Methionine importer (TC 3.A.1.24) family. In terms of assembly, the complex is composed of two ATP-binding proteins (MetN), two transmembrane proteins (MetI) and a solute-binding protein (MetQ).

The protein localises to the cell inner membrane. It carries out the reaction L-methionine(out) + ATP + H2O = L-methionine(in) + ADP + phosphate + H(+). It catalyses the reaction D-methionine(out) + ATP + H2O = D-methionine(in) + ADP + phosphate + H(+). Part of the ABC transporter complex MetNIQ involved in methionine import. Responsible for energy coupling to the transport system. The polypeptide is Methionine import ATP-binding protein MetN 2 (Pseudomonas syringae pv. syringae (strain B728a)).